Reading from the N-terminus, the 396-residue chain is 1-deoxy-D-xylulose 5-phosphate reductoisomerase (396 aa).

Positions 13, 14, 15, 16, and 127 each coordinate NADPH. K128 serves as a coordination point for 1-deoxy-D-xylulose 5-phosphate. E129 serves as a coordination point for NADPH. Residue D153 coordinates Mn(2+). Positions 154, 155, 184, and 207 each coordinate 1-deoxy-D-xylulose 5-phosphate. E155 is a Mn(2+) binding site. G213 is an NADPH binding site. 1-deoxy-D-xylulose 5-phosphate contacts are provided by S220, N225, K226, and E229. E229 is a Mn(2+) binding site.

The protein belongs to the DXR family. Mg(2+) serves as cofactor. Mn(2+) is required as a cofactor.

It catalyses the reaction 2-C-methyl-D-erythritol 4-phosphate + NADP(+) = 1-deoxy-D-xylulose 5-phosphate + NADPH + H(+). The protein operates within isoprenoid biosynthesis; isopentenyl diphosphate biosynthesis via DXP pathway; isopentenyl diphosphate from 1-deoxy-D-xylulose 5-phosphate: step 1/6. Catalyzes the NADPH-dependent rearrangement and reduction of 1-deoxy-D-xylulose-5-phosphate (DXP) to 2-C-methyl-D-erythritol 4-phosphate (MEP). The protein is 1-deoxy-D-xylulose 5-phosphate reductoisomerase of Pseudomonas fluorescens (strain ATCC BAA-477 / NRRL B-23932 / Pf-5).